Consider the following 258-residue polypeptide: Phosphoribosylaminoimidazole-succinocarboxamide synthase (258 aa).

Belongs to the SAICAR synthetase family.

The catalysed reaction is 5-amino-1-(5-phospho-D-ribosyl)imidazole-4-carboxylate + L-aspartate + ATP = (2S)-2-[5-amino-1-(5-phospho-beta-D-ribosyl)imidazole-4-carboxamido]succinate + ADP + phosphate + 2 H(+). It participates in purine metabolism; IMP biosynthesis via de novo pathway; 5-amino-1-(5-phospho-D-ribosyl)imidazole-4-carboxamide from 5-amino-1-(5-phospho-D-ribosyl)imidazole-4-carboxylate: step 1/2. This is Phosphoribosylaminoimidazole-succinocarboxamide synthase from Sphingopyxis alaskensis (strain DSM 13593 / LMG 18877 / RB2256) (Sphingomonas alaskensis).